A 507-amino-acid polypeptide reads, in one-letter code: Rhomboid protease GluP (507 aa).

The next 5 membrane-spanning stretches (helical) occupy residues 179–199, 229–249, 261–281, 283–303, and 312–332; these read FTYL…INGG, IVLH…WSVG, FLLI…VFSP, PSAG…YVAL, and TIGT…FAVS. Residue S288 is the Nucleophile of the active site. The active-site Charge relay system is H339. 2 helical membrane-spanning segments follow: residues 340–360 and 365–385; these read IGGL…KAGA and LLSA…GLHS. TPR repeat units follow at residues 424–457 and 458–491; these read ADLL…EPKD and HASY…KPKE.

It belongs to the peptidase S54 family.

Its subcellular location is the cell membrane. The enzyme catalyses Cleaves type-1 transmembrane domains using a catalytic dyad composed of serine and histidine that are contributed by different transmembrane domains.. Inhibited by dichloroisocoumarin (DCI) and N-p-tosyl-L-phenylalanine chloromethyl ketone (TPCK), but not by other serine protease inhibitors such as sulfonyl fluoride PMSF and 4-(2-aminoethyl)benzenesulfonyl fluoride (AEBSF). In terms of biological role, rhomboid-type serine protease that catalyzes intramembrane proteolysis. Important for normal cell division and sporulation. May act as a glucose exporter. The protein is Rhomboid protease GluP (gluP) of Bacillus subtilis (strain 168).